The chain runs to 301 residues: Probable alpha-L-glutamate ligase (301 aa).

In terms of domain architecture, ATP-grasp spans 104–287 (LQLLSRKGIG…IAGMIIEYIE (184 aa)). ATP contacts are provided by residues lysine 141, 178 to 179 (EY), aspartate 187, and 211 to 213 (RSN). Positions 248, 260, and 262 each coordinate Mg(2+). Residues aspartate 248, glutamate 260, and asparagine 262 each coordinate Mn(2+).

Belongs to the RimK family. Requires Mg(2+) as cofactor. Mn(2+) is required as a cofactor.

This chain is Probable alpha-L-glutamate ligase, found in Methanococcoides burtonii (strain DSM 6242 / NBRC 107633 / OCM 468 / ACE-M).